Reading from the N-terminus, the 517-residue chain is Variant surface glycoprotein MVAT5 (517 aa).

A signal peptide spans 1–21; that stretch reads MIGKAFIILSLLNELPTPTAA. Disulfide bonds link C417–C430 and C426–C443. N435 carries an N-linked (GlcNAc...) asparagine glycan. Positions 454-470 are enriched in low complexity; it reads QAAQTAGAGEGAAGTTT. The disordered stretch occupies residues 454 to 487; that stretch reads QAAQTAGAGEGAAGTTTDKCKDKKKDDCKSPDCK. Positions 471–487 are enriched in basic and acidic residues; the sequence is DKCKDKKKDDCKSPDCK. D495 carries the GPI-anchor amidated aspartate lipid modification. A propeptide spans 496 to 517 (removed in mature form); sequence SSILLNKQFALMVSAAFVALLF.

It is found in the cell membrane. Functionally, VSG forms a coat on the surface of the parasite. The trypanosome evades the immune response of the host by expressing a series of antigenically distinct VSGs from an estimated 1000 VSG genes. This chain is Variant surface glycoprotein MVAT5, found in Trypanosoma brucei rhodesiense.